A 216-amino-acid chain; its full sequence is UDP-N-acetylglucosamine transferase subunit ALG14 (216 aa).

Residues 1-3 (MVC) lie on the Lumenal side of the membrane. The helical transmembrane segment at 4–24 (VLTLAASAGGLAVLLIVRLWA) threads the bilayer. Residues 25–216 (VLRSHPVTPR…PKSVYLGRIV (192 aa)) are Cytoplasmic-facing.

Belongs to the ALG14 family. As to quaternary structure, forms with ALG13 the active heterodimeric UDP-N-acetylglucosamine transferase complex.

Its subcellular location is the endoplasmic reticulum membrane. In terms of biological role, part of the UDP-N-acetylglucosamine transferase complex that operates in the biosynthetic pathway of dolichol-linked oligosaccharides, the glycan precursors employed in protein asparagine (N)-glycosylation. The assembly of dolichol-linked oligosaccharides begins on the cytosolic side of the endoplasmic reticulum membrane and finishes in its lumen. The sequential addition of sugars to dolichol pyrophosphate produces dolichol-linked oligosaccharides containing fourteen sugars, including two GlcNAcs, nine mannoses and three glucoses. Once assembled, the oligosaccharides are transferred from the lipid to nascent proteins by oligosaccharyltransferases. Functions as a protein-membrane adapter recruiting ALG13 at the cytoplasmic face of the endoplasmic reticulum, where the complex catalyzes the second step of dolichol pyrophosphate biosynthesis, transferring a beta1,4-linked N-acetylglucosamine (GlcNAc) from UDP-GlcNAc to GlcNAc-pyrophosphatedolichol (Gn-PDol) to produce N,N'-diacetylchitobiosyl diphosphodolichol. N,N'-diacetylchitobiosyl diphosphodolichol is a substrate for ALG1, the following enzyme in the biosynthetic pathway. The protein is UDP-N-acetylglucosamine transferase subunit ALG14 of Rattus norvegicus (Rat).